The chain runs to 654 residues: Sphingosine kinase 2 (654 aa).

Residues 1 to 17 (MNGHLEAEEQQDQRPDQ) show a composition bias toward basic and acidic residues. A disordered region spans residues 1–28 (MNGHLEAEEQQDQRPDQELTGSWGHGPR). Residues 1–175 (MNGHLEAEEQ…LPGDGEITPD (175 aa)) form a required for binding to sulfatide and phosphoinositides and for membrane localizatione region. The short motif at 122 to 130 (RGRRGARRR) is the Nuclear localization signal element. A DAGKc domain is found at 178–325 (PRPPRLLLLV…LDLLSVTLAS (148 aa)). Residues 188-190 (NPF) and 220-224 (TERQN) contribute to the ATP site. 245-248 (SGDG) contacts substrate. The active-site Proton donor/acceptor is Asp-247. ATP-binding positions include Glu-252 and 277–279 (GSG). Position 344 (Asp-344) interacts with substrate. Positions 351 and 357 each coordinate ATP. Residue Ser-387 is modified to Phosphoserine; by MAPK. A phosphoserine mark is found at Ser-393 and Ser-399. The disordered stretch occupies residues 400–509 (ELTLTPDPAP…PLPTPDARVG (110 aa)). The Nuclear export signal signature appears at 416 to 425 (LHRSVSDLPL). A phosphoserine; by PKD mark is found at Ser-419 and Ser-421. The span at 447-461 (NGGGPELAGDWGGAG) shows a compositional bias: gly residues. The span at 462 to 482 (DAPLSPDPLLSSPPGSPKAAL) shows a compositional bias: low complexity. Ser-477 carries the post-translational modification Phosphoserine. Thr-614 carries the post-translational modification Phosphothreonine; by MAPK. An ATP-binding site is contributed by 622–624 (DGE).

As to quaternary structure, interacts with histone H3. Interacts with HDAC1, HDAC2, MBD2 and SIN3A. Interacts with EEF1A1; the interaction enhances SPHK2 kinase activity. Interacts with PHB2. It depends on Mg(2+) as a cofactor. Phosphorylated by PKD on Ser-419 and Ser-421 upon PMA treatment. Phosphorylation induces export from the nucleus to the cytoplasm. Phosphorylated by MAPK1 and MAPK2 at Ser-387 and Thr-614, phosphorylation is induced by agonists such as EGF and PMA and increases kinase activity. In terms of processing, cleaved by CASP1 in apoptotic cells. The truncated form is released from cells. In terms of tissue distribution, mainly expressed in adult kidney, liver, and brain. Expressed in cerebral cortex and hippocampus (at protein level). Isoform 1 is the predominant form expressed in most tissues.

Its subcellular location is the cytoplasm. The protein localises to the nucleus. It localises to the endoplasmic reticulum. The protein resides in the mitochondrion inner membrane. It is found in the lysosome membrane. The catalysed reaction is a sphingoid base + ATP = a sphingoid 1-phosphate + ADP + H(+). It catalyses the reaction sphing-4-enine + ATP = sphing-4-enine 1-phosphate + ADP + H(+). The enzyme catalyses sphinganine + ATP = sphinganine 1-phosphate + ADP + H(+). It carries out the reaction (4R)-hydroxysphinganine + ATP = (4R)-hydroxysphinganine 1-phosphate + ADP + H(+). Its activity is regulated as follows. Inhibited by sulfatide. Kinase activity is increased by phosphorylation by MAPK2 upon PMA or EGF treatments. Its function is as follows. Catalyzes the phosphorylation of sphingosine to form sphingosine-1-phosphate (SPP), a lipid mediator with both intra- and extracellular functions. Also acts on D-erythro-dihydrosphingosine, D-erythro-sphingosine and L-threo-dihydrosphingosine. Binds phosphoinositides. In contrast to prosurvival SPHK1, has a positive effect on intracellular ceramide levels, inhibits cells growth and enhances apoptosis. In mitochondria, is important for cytochrome-c oxidase assembly and mitochondrial respiration. The SPP produced in mitochondria binds PHB2 and modulates the regulation via PHB2 of complex IV assembly and respiration. In nucleus, plays a role in epigenetic regulation of gene expression. Interacts with HDAC1 and HDAC2 and, through SPP production, inhibits their enzymatic activity, preventing the removal of acetyl groups from lysine residues with histones. Up-regulates acetylation of histone H3-K9, histone H4-K5 and histone H2B-K12. In nucleus, may have an inhibitory effect on DNA synthesis and cell cycle. In mast cells, is the main regulator of SPP production which mediates calcium influx, NF-kappa-B activation, cytokine production, such as TNF and IL6, and degranulation of mast cells. In dopaminergic neurons, is involved in promoting mitochondrial functions regulating ATP and ROS levels. Also involved in the regulation of glucose and lipid metabolism. The protein is Sphingosine kinase 2 of Homo sapiens (Human).